The sequence spans 76 residues: uncharacterized protein (76 aa).

2 consecutive transmembrane segments (helical) span residues 16–33 and 45–61; these read FAFT…GAVL and TMFL…FFCA.

The protein resides in the cell membrane. This is an uncharacterized protein from Bacillus subtilis (strain 168).